A 358-amino-acid polypeptide reads, in one-letter code: Protein RecA 2 (358 aa).

69–76 (GPESSGKT) contacts ATP. Residues 331–358 (GIGKSGAPSPRRRTSPRRPKVAARSAAV) form a disordered region. The span at 340 to 351 (PRRRTSPRRPKV) shows a compositional bias: basic residues.

It belongs to the RecA family.

The protein localises to the cytoplasm. Its function is as follows. Can catalyze the hydrolysis of ATP in the presence of single-stranded DNA, the ATP-dependent uptake of single-stranded DNA by duplex DNA, and the ATP-dependent hybridization of homologous single-stranded DNAs. It interacts with LexA causing its activation and leading to its autocatalytic cleavage. In Myxococcus xanthus, this protein is Protein RecA 2.